The sequence spans 199 residues: Molybdenum cofactor guanylyltransferase (199 aa).

GTP is bound by residues 12 to 14, Lys25, Asn53, Asp71, and Asp101; that span reads LAG. Asp101 is a binding site for Mg(2+).

This sequence belongs to the MobA family. As to quaternary structure, monomer. The cofactor is Mg(2+).

The protein localises to the cytoplasm. It catalyses the reaction Mo-molybdopterin + GTP + H(+) = Mo-molybdopterin guanine dinucleotide + diphosphate. Transfers a GMP moiety from GTP to Mo-molybdopterin (Mo-MPT) cofactor (Moco or molybdenum cofactor) to form Mo-molybdopterin guanine dinucleotide (Mo-MGD) cofactor. The chain is Molybdenum cofactor guanylyltransferase from Cupriavidus necator (strain ATCC 17699 / DSM 428 / KCTC 22496 / NCIMB 10442 / H16 / Stanier 337) (Ralstonia eutropha).